Reading from the N-terminus, the 663-residue chain is Translation factor GUF1 homolog, mitochondrial (663 aa).

The tr-type G domain occupies 64–250; it reads EKIRNFSIIA…AVIERIPPPP (187 aa). Residues 73 to 80, 143 to 147, and 197 to 200 contribute to the GTP site; these read AHIDHGKS, DTPGH, and NKID.

This sequence belongs to the TRAFAC class translation factor GTPase superfamily. Classic translation factor GTPase family. LepA subfamily.

The protein resides in the mitochondrion inner membrane. The catalysed reaction is GTP + H2O = GDP + phosphate + H(+). Promotes mitochondrial protein synthesis. May act as a fidelity factor of the translation reaction, by catalyzing a one-codon backward translocation of tRNAs on improperly translocated ribosomes. Binds to mitochondrial ribosomes in a GTP-dependent manner. The chain is Translation factor GUF1 homolog, mitochondrial from Arabidopsis thaliana (Mouse-ear cress).